The primary structure comprises 398 residues: MSSTDPLLRRVENYRESCDNCAKSKVRCGKEQPWCQRCERRGQVCSYSPSQRSRKRTLDAAHPESDQRNGTPPFTAISSASSVAAVSTGFSSMLSQADSWGTCPDLVELLTSGSSSESLTPDNNHLVWLSDMESIAGDSNISKSMERMDVFPYPKSIASSAAGVVNGSGAGADSMGRRSTCPLQNKQHCEADLISALAKPELPSLSCWGNPKASQNLGTILTASRATLKCVTTAMSCTCTPNDNVALLATAVLLRILSWYHIVLKNCNGPNDTSAATIDDHTSPTPSNDGKDTERSVSRDTNVSQDGSEPSSLIMPPMTIGAYELDSENRERMIGHIMLSELGKMGNLLSDFSKKFCDPQSTMLGNDNRSQLFLALEMLIRNKHMATVLDVRKKLEVK.

Residues 18–45 (CDNCAKSKVRCGKEQPWCQRCERRGQVC) constitute a DNA-binding region (zn(2)-C6 fungal-type). 2 disordered regions span residues 52-73 (RSRKRTLDAAHPESDQRNGTPP) and 275-314 (AATIDDHTSPTPSNDGKDTERSVSRDTNVSQDGSEPSSLI). Basic and acidic residues-rich tracts occupy residues 56–67 (RTLDAAHPESDQ) and 289–298 (DGKDTERSVS). Residues 299-311 (RDTNVSQDGSEPS) show a composition bias toward polar residues.

The protein localises to the nucleus. Functionally, transcription factor that specifically regulates the expression of the gene cluster that mediates the biosynthesis of aurofusarin, a red mycelium pigment which is acting as a mycotoxin. This Gibberella zeae (strain ATCC MYA-4620 / CBS 123657 / FGSC 9075 / NRRL 31084 / PH-1) (Wheat head blight fungus) protein is Aurofusarin biosynthesis regulatory protein aurR1.